A 206-amino-acid chain; its full sequence is MDSAGQDINLNSPNKGLLSDSMTDVPVDTGVAARTPAVEGLTEAEEEELRAELTKVEEEIVTLRQVLAAKERHCGELKRRLGLSTLGELKQNLSRSWHDVQVSSAYVKTSEKLGEWNEKVTQSDLYKKTQETLSQAGQKTSAALSTVGSAISRKLGDMRNSATFKSFEDRVGTIKSKVVGDRENGSDNLPSSAGSGDKPLSDPAPF.

The residue at position 1 (Met-1) is an N-acetylmethionine. The segment covering 1 to 14 has biased composition (polar residues); the sequence is MDSAGQDINLNSPN. A disordered region spans residues 1–24; the sequence is MDSAGQDINLNSPNKGLLSDSMTD. Phosphoserine occurs at positions 3, 12, 19, and 21. Residues 38–82 are a coiled coil; that stretch reads VEGLTEAEEEELRAELTKVEEEIVTLRQVLAAKERHCGELKRRLG. Residues Ser-96, Ser-149, and Ser-161 each carry the phosphoserine modification. The residue at position 163 (Thr-163) is a Phosphothreonine. Ser-166 carries the post-translational modification Phosphoserine. Thr-173 bears the Phosphothreonine mark. Residues 175-185 show a composition bias toward basic and acidic residues; that stretch reads KSKVVGDRENG. Residues 175 to 206 are disordered; sequence KSKVVGDRENGSDNLPSSAGSGDKPLSDPAPF. Ser-192 and Ser-195 each carry phosphoserine.

Belongs to the TPD52 family. In terms of assembly, forms a homodimer or heterodimer with other members of the family. Interacts with MAL2.

This chain is Tumor protein D54 (TPD52L2), found in Homo sapiens (Human).